The following is a 636-amino-acid chain: Biosynthetic arginine decarboxylase (636 aa).

Lys-101 is subject to N6-(pyridoxal phosphate)lysine. Position 286–296 (286–296 (FDVGGGLAVDY)) interacts with substrate.

This sequence belongs to the Orn/Lys/Arg decarboxylase class-II family. SpeA subfamily. Mg(2+) is required as a cofactor. It depends on pyridoxal 5'-phosphate as a cofactor.

It catalyses the reaction L-arginine + H(+) = agmatine + CO2. Its pathway is amine and polyamine biosynthesis; agmatine biosynthesis; agmatine from L-arginine: step 1/1. Its function is as follows. Catalyzes the biosynthesis of agmatine from arginine. The protein is Biosynthetic arginine decarboxylase of Shewanella amazonensis (strain ATCC BAA-1098 / SB2B).